The primary structure comprises 474 residues: Pyruvate kinase (474 aa).

Substrate is bound at residue R37. The K(+) site is built by N39, S41, and D71. 39-42 (NFSH) contacts ATP. Residues R78 and K160 each coordinate ATP. E222 serves as a coordination point for Mg(2+). Positions 245, 246, and 278 each coordinate substrate. A Mg(2+)-binding site is contributed by D246.

Belongs to the pyruvate kinase family. In terms of assembly, homotetramer. Requires Mg(2+) as cofactor. It depends on K(+) as a cofactor.

It carries out the reaction pyruvate + ATP = phosphoenolpyruvate + ADP + H(+). Its pathway is carbohydrate degradation; glycolysis; pyruvate from D-glyceraldehyde 3-phosphate: step 5/5. This Agrobacterium vitis (Rhizobium vitis) protein is Pyruvate kinase (ttuE).